Reading from the N-terminus, the 324-residue chain is Beta-ketoacyl-[acyl-carrier-protein] synthase III (324 aa).

Catalysis depends on residues Cys-114 and His-246. The tract at residues 247–251 (QANLR) is ACP-binding. Asn-276 is an active-site residue.

This sequence belongs to the thiolase-like superfamily. FabH family. As to quaternary structure, homodimer.

The protein localises to the cytoplasm. The enzyme catalyses malonyl-[ACP] + acetyl-CoA + H(+) = 3-oxobutanoyl-[ACP] + CO2 + CoA. It functions in the pathway lipid metabolism; fatty acid biosynthesis. Its function is as follows. Catalyzes the condensation reaction of fatty acid synthesis by the addition to an acyl acceptor of two carbons from malonyl-ACP. Catalyzes the first condensation reaction which initiates fatty acid synthesis and may therefore play a role in governing the total rate of fatty acid production. Possesses both acetoacetyl-ACP synthase and acetyl transacylase activities. Its substrate specificity determines the biosynthesis of branched-chain and/or straight-chain of fatty acids. In Campylobacter jejuni (strain RM1221), this protein is Beta-ketoacyl-[acyl-carrier-protein] synthase III.